The following is a 358-amino-acid chain: ATP-dependent (S)-NAD(P)H-hydrate dehydratase (358 aa).

The 292-residue stretch at Leu-63–Leu-354 folds into the YjeF C-terminal domain. (6S)-NADPHX-binding positions include Gly-163 and Asn-220–Arg-226. ATP contacts are provided by residues Lys-261 to Asp-265 and Gly-280 to Gly-289. Asp-290 is a binding site for (6S)-NADPHX.

This sequence belongs to the NnrD/CARKD family. It depends on Mg(2+) as a cofactor.

The catalysed reaction is (6S)-NADHX + ATP = ADP + phosphate + NADH + H(+). It catalyses the reaction (6S)-NADPHX + ATP = ADP + phosphate + NADPH + H(+). Functionally, catalyzes the dehydration of the S-form of NAD(P)HX at the expense of ATP, which is converted to ADP. Together with NAD(P)HX epimerase, which catalyzes the epimerization of the S- and R-forms, the enzyme allows the repair of both epimers of NAD(P)HX, a damaged form of NAD(P)H that is a result of enzymatic or heat-dependent hydration. This is ATP-dependent (S)-NAD(P)H-hydrate dehydratase from Nematostella vectensis (Starlet sea anemone).